Consider the following 792-residue polypeptide: Genome polyprotein (792 aa).

The tract at residues 1 to 15 is interaction with host EXOC1; sequence MNNQRKKTGNPSFNM. Residues 1–101 are Cytoplasmic-facing; the sequence is MNNQRKKTGN…LNIMNRRRRS (101 aa). Residues 37 to 72 form a hydrophobic; homodimerization of capsid protein C region; sequence LLSGQGPMKLVMAFVAFLRFLAIPPTAGILKRWGSF. Positions 101–114 are cleaved as a propeptide — ER anchor for the capsid protein C, removed in mature form by serine protease NS3; sequence SVTMILMLLPTALA. A helical membrane pass occupies residues 102–119; sequence VTMILMLLPTALAFHLTT. The Extracellular portion of the chain corresponds to 120–242; it reads RGGEPTLIVS…QIQKVETWAL (123 aa). Residue Asn183 is glycosylated (N-linked (GlcNAc...) asparagine; by host). Residues 243-260 form a helical membrane-spanning segment; sequence RHPGFTVIGLFLAHAIGT. Residue Ser261 is a topological domain, cytoplasmic. A helical transmembrane segment spans residues 262-280; it reads ITQKGIIFILLMLVTPSMA. The Extracellular segment spans residues 281–725; it reads MRCVGIGNRD…IHQIFGTAYG (445 aa). 4 cysteine pairs are disulfide-bonded: Cys283/Cys310, Cys340/Cys401, Cys354/Cys385, and Cys372/Cys396. Residue Asn347 is glycosylated (N-linked (GlcNAc...) asparagine; by host). The fusion peptide stretch occupies residues 378 to 391; that stretch reads DRGWGNGCGLFGKG. N-linked (GlcNAc...) asparagine; by host glycosylation is present at Asn433. Cystine bridges form between Cys465/Cys565 and Cys582/Cys613. Residues 726-746 form a helical membrane-spanning segment; the sequence is VLFSGVSWTMKIGIGILLTWL. Residues 747-752 are Cytoplasmic-facing; it reads GLNSRS. Residues 753 to 775 traverse the membrane as a helical segment; that stretch reads TSLSMTCIAVGMVTLYLGVMVQA. Topologically, residues 776-792 are extracellular; that stretch reads DSGCVINWKGKELKCGS. Cys779 and Cys790 form a disulfide bridge.

In terms of assembly, homodimer. Interacts (via N-terminus) with host EXOC1 (via C-terminus); this interaction results in EXOC1 degradation through the proteasome degradation pathway. As to quaternary structure, forms heterodimers with envelope protein E in the endoplasmic reticulum and Golgi. Homodimer; in the endoplasmic reticulum and Golgi. Interacts with protein prM. Interacts with non-structural protein 1. In terms of assembly, homodimer; Homohexamer when secreted. Interacts with envelope protein E. Specific enzymatic cleavages in vivo yield mature proteins. Cleavages in the lumen of endoplasmic reticulum are performed by host signal peptidase, wereas cleavages in the cytoplasmic side are performed by serine protease NS3. Signal cleavage at the 2K-4B site requires a prior NS3 protease-mediated cleavage at the 4A-2K site. In terms of processing, N-glycosylated. Post-translationally, N-glycosylated. The excreted form is glycosylated and this is required for efficient secretion of the protein from infected cells.

It is found in the virion. Its subcellular location is the host nucleus. The protein resides in the host cytoplasm. The protein localises to the host perinuclear region. It localises to the secreted. It is found in the virion membrane. Its subcellular location is the host endoplasmic reticulum membrane. Plays a role in virus budding by binding to the cell membrane and gathering the viral RNA into a nucleocapsid that forms the core of a mature virus particle. During virus entry, may induce genome penetration into the host cytoplasm after hemifusion induced by the surface proteins. Can migrate to the cell nucleus where it modulates host functions. Overcomes the anti-viral effects of host EXOC1 by sequestering and degrading the latter through the proteasome degradation pathway. In terms of biological role, inhibits RNA silencing by interfering with host Dicer. Functionally, prevents premature fusion activity of envelope proteins in trans-Golgi by binding to envelope protein E at pH6.0. After virion release in extracellular space, gets dissociated from E dimers. Its function is as follows. Acts as a chaperone for envelope protein E during intracellular virion assembly by masking and inactivating envelope protein E fusion peptide. prM is the only viral peptide matured by host furin in the trans-Golgi network probably to avoid catastrophic activation of the viral fusion activity in acidic Golgi compartment prior to virion release. prM-E cleavage is inefficient, and many virions are only partially matured. These uncleaved prM would play a role in immune evasion. May play a role in virus budding. Exerts cytotoxic effects by activating a mitochondrial apoptotic pathway through M ectodomain. May display a viroporin activity. In terms of biological role, binds to host cell surface receptor and mediates fusion between viral and cellular membranes. Envelope protein is synthesized in the endoplasmic reticulum in the form of heterodimer with protein prM. They play a role in virion budding in the ER, and the newly formed immature particle is covered with 60 spikes composed of heterodimer between precursor prM and envelope protein E. The virion is transported to the Golgi apparatus where the low pH causes dissociation of PrM-E heterodimers and formation of E homodimers. prM-E cleavage is inefficient, and many virions are only partially matured. These uncleaved prM would play a role in immune evasion. Functionally, involved in immune evasion, pathogenesis and viral replication. Once cleaved off the polyprotein, is targeted to three destinations: the viral replication cycle, the plasma membrane and the extracellular compartment. Essential for viral replication. Required for formation of the replication complex and recruitment of other non-structural proteins to the ER-derived membrane structures. Excreted as a hexameric lipoparticle that plays a role against host immune response. Antagonizing the complement function. Binds to the host macrophages and dendritic cells. Inhibits signal transduction originating from Toll-like receptor 3 (TLR3). Its function is as follows. Disrupts the host endothelial glycocalyx layer of host pulmonary microvascular endothelial cells, inducing degradation of sialic acid and shedding of heparan sulfate proteoglycans. NS1 induces expression of sialidases, heparanase, and activates cathepsin L, which activates heparanase via enzymatic cleavage. These effects are probably linked to the endothelial hyperpermeability observed in severe dengue disease. This chain is Genome polyprotein, found in Aedes aegypti (Yellowfever mosquito).